The following is a 699-amino-acid chain: Elongation factor G (699 aa).

Residues 10–292 form the tr-type G domain; it reads NRTRNIGIMA…AVIDYLPSPT (283 aa). GTP contacts are provided by residues 19–26, 90–94, and 144–147; these read AHIDAGKT, DTPGH, and NKMD. Positions 292–312 are disordered; the sequence is TDVPAIRGEEDDGSEGSRSAS.

It belongs to the TRAFAC class translation factor GTPase superfamily. Classic translation factor GTPase family. EF-G/EF-2 subfamily.

It localises to the cytoplasm. In terms of biological role, catalyzes the GTP-dependent ribosomal translocation step during translation elongation. During this step, the ribosome changes from the pre-translocational (PRE) to the post-translocational (POST) state as the newly formed A-site-bound peptidyl-tRNA and P-site-bound deacylated tRNA move to the P and E sites, respectively. Catalyzes the coordinated movement of the two tRNA molecules, the mRNA and conformational changes in the ribosome. This Coxiella burnetii (strain RSA 331 / Henzerling II) protein is Elongation factor G.